The primary structure comprises 106 residues: ATPase inhibitor, mitochondrial (106 aa).

A mitochondrion-targeting transit peptide spans 1-25 (MAGSALAVRARFGVWGMKVLQTRGF). The interval 26–52 (VSDSSDSMDTGAGSIREAGGAFGKREK) is N-terminal inhibitory region. A disordered region spans residues 26–58 (VSDSSDSMDTGAGSIREAGGAFGKREKAEEDRY). S39 bears the Phosphoserine mark. Over residues 48-58 (GKREKAEEDRY) the composition is skewed to basic and acidic residues. Positions 60-106 (REKTKEQLAALRKHHEDEIDHHSKEIERLQKQIERHKKKIQQLKNNH) form a coiled coil. Positions 74 to 106 (HEDEIDHHSKEIERLQKQIERHKKKIQQLKNNH) are antiparallel alpha-helical coiled coil region. At K103 the chain carries N6-succinyllysine.

This sequence belongs to the ATPase inhibitor family. As to quaternary structure, homodimer; represents the active form and is present at a pH value below 6.5. Homotetramer; represents the inactive form and is present at a pH value above 7.0.

The protein resides in the mitochondrion. Its function is as follows. Endogenous F(1)F(o)-ATPase inhibitor limiting ATP depletion when the mitochondrial membrane potential falls below a threshold and the F(1)F(o)-ATP synthase starts hydrolyzing ATP to pump protons out of the mitochondrial matrix. Required to avoid the consumption of cellular ATP when the F(1)F(o)-ATP synthase enzyme acts as an ATP hydrolase. Indirectly acts as a regulator of heme synthesis in erythroid tissues: regulates heme synthesis by modulating the mitochondrial pH and redox potential, allowing FECH to efficiently catalyze the incorporation of iron into protoporphyrin IX to produce heme. The protein is ATPase inhibitor, mitochondrial of Mus musculus (Mouse).